A 626-amino-acid chain; its full sequence is Hormonally up-regulated neu tumor-associated kinase homolog B (626 aa).

ATP contacts are provided by residues 1-2 (KV) and Lys17. The 246-residue stretch at 1-246 (KVREGLHVGT…IQQALANRWL (246 aa)) folds into the Protein kinase domain. Residue Asp112 is the Proton acceptor of the active site. Positions 336-357 (KYKMNKNSYEERRSKDLEKRGE) are enriched in basic and acidic residues. Disordered stretches follow at residues 336-407 (KYKM…ESFG), 477-574 (VNRE…RSRG), and 590-615 (QVVS…PGYA). Polar residues predominate over residues 374–390 (SHRQSTCLTPQGHSSSK). The span at 392 to 405 (PIKERRSSKSERES) shows a compositional bias: basic and acidic residues. Positions 518–532 (DNTSPLKGHSNQASF) are enriched in polar residues. Over residues 539-555 (SPSSPESMSPTSPHSPS) the composition is skewed to low complexity. Residues 556–566 (CNNNISGNLGS) show a composition bias toward polar residues.

This sequence belongs to the protein kinase superfamily. CAMK Ser/Thr protein kinase family. SNF1 subfamily. In the egg, expressed predominantly in the animal hemisphere. This pattern of expression persists throughout the cleavage and blastula stages. At the gastrula stage, expression is restricted to the ectoderm. In later-stage embryos, expressed over the entire embryonic surface including the open neural plate at stage 15 and the neural tube at stage 22. In tadpoles, strongly expressed in the neural tube, motor neurons, brain regions and sensory organs (otic vesicle and eye). Also expressed in the perisomitic mesoderm, brachial arches and embryonic epidermis of tadpoles.

The catalysed reaction is L-seryl-[protein] + ATP = O-phospho-L-seryl-[protein] + ADP + H(+). It carries out the reaction L-threonyl-[protein] + ATP = O-phospho-L-threonyl-[protein] + ADP + H(+). In Xenopus laevis (African clawed frog), this protein is Hormonally up-regulated neu tumor-associated kinase homolog B (hunk-b).